Consider the following 981-residue polypeptide: MRSYEFHLARMSGATLCVVTGYRLLTSKWLADRIEDYRQRVIADRKKIIRDAAMIRTSVQKQMELVRISVRKGHSHQEAATERNSATETMLSVVEKSGYEPYIISPSPREAEYHGSRQFYSLADFRQDYRRDEITDRHIIVMTDVDYYVDMNELIGLGVPVLMYTFQPSTVSGEVKDGYFTITDDSVHYRVAGGKDVRHRIWNYNQDTMYTVSRPTGFWENLKRILRDITGITALCGFLYNKLGMAPFGDPVTMFTVDQFKMGEHRNIVSIVPFATCRSNLLKISEYGAELEYMRYQQRNNIANFNAVTYISEEGPLISLGLEGNFASVQLPLQDFENVRTAYELSKTNNLSDTVRRSGRPCKEAAIIHKCLQAECVLASEVVHKPGDLARHYQAVGSLYDVDPAEQGKCYAREYAPGPLTQTAVFPNESRSNERATIDGRIAGPQAKAKSREHITPRMRKVARDFVRHLVPEAGLGRPYPLTYVEEQQSKPLQRARNDANRYHDEFTMIVKAFQKKEAYNAPNYPRNISTVPHNQNVKLSSYTYAFKASTLQHVPWYMPTHTPAEIADAVQNLAASTTELVETDYSKFDGTFLRFMRECVEFAIYKRWVHLDHLAELSQLLANELQAPAVTRLGLKYDPDCSRLSGSALTTDGNSIANAFVSYLANRLAGMDDDEAWSWIGIVYGDDGLRSGNVSDTLLTDTASSLGFDLKIVNRAPRGSPVTFLARVYLDPWSSPASVQSPFRTLLKLHTTCDTQSEIEDIGWAKTQAYLVTDCKTPFIGHWCRAYQRNCTARVVQYADYNDIPFWVKNDDHLGNSWPQSDSVDWNDVVANELGLTTAELLKHIALLEAYTGPTSGLPRLTTSIDLEPKMSVALDGEVQAGPSQQQTDKDGTNPTGDRSAPRRARTALPGVDGHTRCTRRSDRGPGERDANVRDKRPRRSMPPSRSVSSVPPPSSSGGGADGDRVEGAARPRRQRRTPV.

The 123-residue stretch at 579 to 701 folds into the RdRp catalytic domain; sequence TELVETDYSK…SGNVSDTLLT (123 aa). The disordered stretch occupies residues 879–981; it reads EVQAGPSQQQ…RPRRQRRTPV (103 aa). Residues 883-898 show a composition bias toward polar residues; that stretch reads GPSQQQTDKDGTNPTG. Over residues 915-936 the composition is skewed to basic and acidic residues; it reads GHTRCTRRSDRGPGERDANVRD. Residues 972–981 are compositionally biased toward basic residues; it reads RPRRQRRTPV.

Belongs to the nodaviridae RNA polymerase family.

It catalyses the reaction RNA(n) + a ribonucleoside 5'-triphosphate = RNA(n+1) + diphosphate. Its function is as follows. RNA-dependent RNA polymerase which replicates the viral genome composed of 2 RNA segments, RNA1 and RNA2. The chain is RNA-directed RNA polymerase from Atlantic halibut nervous necrosis virus (AhNNV).